The primary structure comprises 526 residues: Peptide chain release factor 3 (526 aa).

The tr-type G domain occupies 9–277 (DKRRTFAIIS…GIVEWAPVPQ (269 aa)). GTP-binding positions include 18 to 25 (SHPDAGKT), 86 to 90 (DTPGH), and 140 to 143 (NKLD).

This sequence belongs to the TRAFAC class translation factor GTPase superfamily. Classic translation factor GTPase family. PrfC subfamily.

It localises to the cytoplasm. In terms of biological role, increases the formation of ribosomal termination complexes and stimulates activities of RF-1 and RF-2. It binds guanine nucleotides and has strong preference for UGA stop codons. It may interact directly with the ribosome. The stimulation of RF-1 and RF-2 is significantly reduced by GTP and GDP, but not by GMP. The sequence is that of Peptide chain release factor 3 from Shewanella pealeana (strain ATCC 700345 / ANG-SQ1).